We begin with the raw amino-acid sequence, 389 residues long: Phospholipid phosphatase-related protein type 2 (389 aa).

2 helical membrane passes run 14–34 (IIPC…AFFP) and 66–86 (FLGV…AGQV). N-linked (GlcNAc...) asparagine glycosylation is present at asparagine 102. 3 helical membrane-spanning segments follow: residues 147–167 (AALC…VFRV), 176–196 (SLCL…VAEY), and 203–223 (VLAG…CVVH). Serine 236 and serine 249 each carry phosphoserine. Disordered regions lie at residues 255 to 280 (SVAQ…PQNC) and 295 to 351 (APAM…GRKL). Residues 265 to 278 (SHSTPARLTPSKPQ) are compositionally biased toward polar residues. Residues 314-339 (TPLPLPLPLPAPAPSQGPSPSSPGPG) show a composition bias toward pro residues.

Belongs to the PA-phosphatase related phosphoesterase family.

Its subcellular location is the membrane. In Bos taurus (Bovine), this protein is Phospholipid phosphatase-related protein type 2.